We begin with the raw amino-acid sequence, 112 residues long: Nitrogen regulatory protein P-II (112 aa).

Tyrosine 51 carries the post-translational modification O-UMP-tyrosine.

This sequence belongs to the P(II) protein family. In terms of assembly, homotrimer.

Functionally, in nitrogen-limiting conditions, when the ratio of Gln to 2-ketoglutarate decreases, P-II is uridylylated to P-II-UMP. P-II-UMP allows the deadenylation of glutamine synthetase (GS), thus activating the enzyme. Conversely, in nitrogen excess P-II is deuridylated and promotes the adenylation of GS. P-II indirectly controls the transcription of the GS gene (glnA). P-II prevents NR-II-catalyzed conversion of NR-I to NR-I-phosphate, the transcriptional activator of glnA. When P-II is uridylylated to P-II-UMP, these events are reversed. This chain is Nitrogen regulatory protein P-II (glnB), found in Bradyrhizobium diazoefficiens (strain JCM 10833 / BCRC 13528 / IAM 13628 / NBRC 14792 / USDA 110).